A 139-amino-acid polypeptide reads, in one-letter code: Hydrogenase maturation factor HypA (139 aa).

Histidine 2 provides a ligand contact to Ni(2+). Zn(2+) contacts are provided by cysteine 73, cysteine 76, cysteine 110, and cysteine 113.

It belongs to the HypA/HybF family.

In terms of biological role, involved in the maturation of [NiFe] hydrogenases. Required for nickel insertion into the metal center of the hydrogenase. The protein is Hydrogenase maturation factor HypA of Pyrococcus horikoshii (strain ATCC 700860 / DSM 12428 / JCM 9974 / NBRC 100139 / OT-3).